The following is a 154-amino-acid chain: 6,7-dimethyl-8-ribityllumazine synthase (154 aa).

5-amino-6-(D-ribitylamino)uracil-binding positions include Phe-22, 56–58, and 80–82; these read AFE and TVI. 85–86 contributes to the (2S)-2-hydroxy-3-oxobutyl phosphate binding site; sequence AT. The active-site Proton donor is the His-88. Phe-113 is a binding site for 5-amino-6-(D-ribitylamino)uracil. Residue Arg-127 participates in (2S)-2-hydroxy-3-oxobutyl phosphate binding.

This sequence belongs to the DMRL synthase family. In terms of assembly, forms an icosahedral capsid composed of 60 subunits, arranged as a dodecamer of pentamers.

It carries out the reaction (2S)-2-hydroxy-3-oxobutyl phosphate + 5-amino-6-(D-ribitylamino)uracil = 6,7-dimethyl-8-(1-D-ribityl)lumazine + phosphate + 2 H2O + H(+). Its pathway is cofactor biosynthesis; riboflavin biosynthesis; riboflavin from 2-hydroxy-3-oxobutyl phosphate and 5-amino-6-(D-ribitylamino)uracil: step 1/2. Catalyzes the formation of 6,7-dimethyl-8-ribityllumazine by condensation of 5-amino-6-(D-ribitylamino)uracil with 3,4-dihydroxy-2-butanone 4-phosphate. This is the penultimate step in the biosynthesis of riboflavin. This chain is 6,7-dimethyl-8-ribityllumazine synthase, found in Bacillus amyloliquefaciens (Bacillus velezensis).